Here is a 329-residue protein sequence, read N- to C-terminus: GTP 3',8-cyclase (329 aa).

The region spanning 8–234 is the Radical SAM core domain; that stretch reads AFARKFYYLR…QLRQRSDGPA (227 aa). Arg17 contacts GTP. The [4Fe-4S] cluster site is built by Cys24 and Cys28. Tyr30 is a binding site for S-adenosyl-L-methionine. Cys31 lines the [4Fe-4S] cluster pocket. GTP is bound at residue Arg68. S-adenosyl-L-methionine is bound at residue Gly72. A GTP-binding site is contributed by Thr99. Ser123 lines the S-adenosyl-L-methionine pocket. Lys160 serves as a coordination point for GTP. Met194 lines the S-adenosyl-L-methionine pocket. Residues Cys257 and Cys260 each contribute to the [4Fe-4S] cluster site. GTP is bound at residue 262–264; it reads RLR. Position 274 (Cys274) interacts with [4Fe-4S] cluster.

This sequence belongs to the radical SAM superfamily. MoaA family. As to quaternary structure, monomer and homodimer. It depends on [4Fe-4S] cluster as a cofactor.

It carries out the reaction GTP + AH2 + S-adenosyl-L-methionine = (8S)-3',8-cyclo-7,8-dihydroguanosine 5'-triphosphate + 5'-deoxyadenosine + L-methionine + A + H(+). It functions in the pathway cofactor biosynthesis; molybdopterin biosynthesis. Functionally, catalyzes the cyclization of GTP to (8S)-3',8-cyclo-7,8-dihydroguanosine 5'-triphosphate. This Salmonella dublin (strain CT_02021853) protein is GTP 3',8-cyclase.